A 271-amino-acid polypeptide reads, in one-letter code: Zinc finger protein 501 (271 aa).

C2H2-type zinc fingers lie at residues 22-44 (SKCS…QRIH), 50-72 (YVCS…LRIH), 78-100 (YKCN…LRIH), 106-128 (YKCN…QRIH), 134-156 (YKCA…QRSH), 162-184 (FKCN…QRIH), 190-212 (YTCT…ERTH), 218-240 (YKCS…YRIH), and 246-268 (YECF…QRLH).

The protein belongs to the krueppel C2H2-type zinc-finger protein family.

The protein resides in the nucleus. It is found in the nucleolus. Its function is as follows. May be involved in transcriptional regulation. Essential for Golgi structural integrity. The sequence is that of Zinc finger protein 501 (ZNF501) from Pongo abelii (Sumatran orangutan).